The sequence spans 622 residues: Apical membrane antigen 1 (622 aa).

An N-terminal signal peptide occupies residues 1-24 (MRKLYCVLLLSAFEFTYMINFGRG). Over 25 to 546 (QNYWEHPYQK…EHKPTYDKMK (522 aa)) the chain is Extracellular. 5 disulfide bridges follow: Cys-149–Cys-302, Cys-217–Cys-247, Cys-263–Cys-275, Cys-320–Cys-418, and Cys-337–Cys-409. Residue Asn-162 is glycosylated (N-linked (GlcNAc...) asparagine). Asn-286, Asn-371, Asn-421, Asn-422, and Asn-499 each carry an N-linked (GlcNAc...) asparagine glycan. 3 disulfide bridges follow: Cys-443-Cys-502, Cys-490-Cys-507, and Cys-492-Cys-509. The chain crosses the membrane as a helical span at residues 547 to 567 (IIIASSAAVAVLATILMVYLY). The Cytoplasmic portion of the chain corresponds to 568–622 (KRKGNAEKYDKMDEPQDYGKSNSRNDEMLDPEASFWGEEKRASHTTPVLMEKPYY). The interval 577–607 (DKMDEPQDYGKSNSRNDEMLDPEASFWGEEK) is disordered.

Belongs to the apicomplexan parasites AMA1 family.

The protein localises to the membrane. In terms of biological role, involved in parasite invasion of erythrocytes. The chain is Apical membrane antigen 1 (AMA-1) from Plasmodium falciparum (isolate 7G8).